The chain runs to 511 residues: Histidine ammonia-lyase (511 aa).

The segment at residues 142–144 (ASG) is a cross-link (5-imidazolinone (Ala-Gly)). A 2,3-didehydroalanine (Ser) modification is found at Ser-143.

It belongs to the PAL/histidase family. Contains an active site 4-methylidene-imidazol-5-one (MIO), which is formed autocatalytically by cyclization and dehydration of residues Ala-Ser-Gly.

The protein localises to the cytoplasm. The catalysed reaction is L-histidine = trans-urocanate + NH4(+). Its pathway is amino-acid degradation; L-histidine degradation into L-glutamate; N-formimidoyl-L-glutamate from L-histidine: step 1/3. This chain is Histidine ammonia-lyase, found in Brucella canis (strain ATCC 23365 / NCTC 10854 / RM-666).